Consider the following 312-residue polypeptide: Olfactory receptor 4F3/4F16/4F29 (312 aa).

Over 1–25 the chain is Extracellular; it reads MDGENHSVVSEFLFLGLTHSWEIQL. An N-linked (GlcNAc...) asparagine glycan is attached at Asn5. A helical transmembrane segment spans residues 26-49; that stretch reads LLLVFSSVLYVASITGNILIVFSV. Topologically, residues 50–57 are cytoplasmic; the sequence is TTDPHLHS. Residues 58-79 form a helical membrane-spanning segment; that stretch reads PMYFLLASLSFIDLGACSVTSP. The Extracellular segment spans residues 80-100; that stretch reads KMIYDLFRKRKVISFGGCIAQ. A disulfide bridge links Cys97 with Cys189. Residues 101–120 form a helical membrane-spanning segment; it reads IFFIHVVGGVEMVLLIAMAF. At 121-139 the chain is on the cytoplasmic side; sequence DRYVALCKPLHYLTIMSPR. The helical transmembrane segment at 140–158 threads the bilayer; that stretch reads MCLSFLAVAWTLGVSHSLF. Over 159-195 the chain is Extracellular; it reads QLAFLVNLAFCGPNVLDSFYCDLPRLLRLACTDTYRL. Residues 196 to 219 traverse the membrane as a helical segment; the sequence is QFMVTVNSGFICVGTFFILLISYV. Over 220–235 the chain is Cytoplasmic; the sequence is FILFTVWKHSSGGSSK. The helical transmembrane segment at 236 to 258 threads the bilayer; sequence ALSTLSAHSTVVLLFFGPPMFVY. Over 259–269 the chain is Extracellular; that stretch reads TRPHPNSQMDK. Residues 270-289 traverse the membrane as a helical segment; sequence FLAIFDAVLTPFLNPVVYTF. The Cytoplasmic portion of the chain corresponds to 290–312; that stretch reads RNKEMKAAIKRVCKQLVIYKRIS.

This sequence belongs to the G-protein coupled receptor 1 family.

Its subcellular location is the cell membrane. Odorant receptor. This Homo sapiens (Human) protein is Olfactory receptor 4F3/4F16/4F29 (OR4F3).